The primary structure comprises 131 residues: uncharacterized protein (131 aa).

Residues Gln-15 to Glu-43 form a disordered region. The segment covering Ala-23 to Asn-34 has biased composition (polar residues).

Belongs to the PDCD5 family.

This is an uncharacterized protein from Schizosaccharomyces pombe (strain 972 / ATCC 24843) (Fission yeast).